We begin with the raw amino-acid sequence, 405 residues long: Argininosuccinate synthase (405 aa).

12–20 (AYSGGLDTS) provides a ligand contact to ATP. Residues tyrosine 90 and serine 95 each contribute to the L-citrulline site. Glycine 120 serves as a coordination point for ATP. Positions 122, 126, and 127 each coordinate L-aspartate. Position 126 (asparagine 126) interacts with L-citrulline. 5 residues coordinate L-citrulline: arginine 130, serine 179, serine 188, glutamate 265, and tyrosine 277.

The protein belongs to the argininosuccinate synthase family. Type 1 subfamily. As to quaternary structure, homotetramer.

It is found in the cytoplasm. It carries out the reaction L-citrulline + L-aspartate + ATP = 2-(N(omega)-L-arginino)succinate + AMP + diphosphate + H(+). It participates in amino-acid biosynthesis; L-arginine biosynthesis; L-arginine from L-ornithine and carbamoyl phosphate: step 2/3. The protein is Argininosuccinate synthase of Clostridium perfringens (strain 13 / Type A).